Here is a 533-residue protein sequence, read N- to C-terminus: Thromboxane-A synthase (533 aa).

Residues 1–10 are Cytoplasmic-facing; sequence MEVLGLLKFE. Residues 11–31 form a helical membrane-spanning segment; sequence VSGTIVTVTLLVALLALLKWY. Residues 32 to 75 lie on the Lumenal side of the membrane; the sequence is SMSAFSRLEKLGIRHPKPSPFVGNLMFFRQGFWESQLELRERYG. Residues 76–96 form a helical membrane-spanning segment; it reads PLCGYYLGRRMHVVISEPDMI. Residues 97-223 are Cytoplasmic-facing; that stretch reads KQVLVENFSN…RRASTFCIPR (127 aa). A helical membrane pass occupies residues 224–244; that stretch reads PLLVLILSFPSIMVPLARILP. The Lumenal portion of the chain corresponds to 245 to 335; the sequence is NKNRDELNGF…FTVDEIVGQA (91 aa). Residues 336–356 traverse the membrane as a helical segment; sequence FLFLIAGHEVITNTLSFITYL. Residues 357 to 533 lie on the Cytoplasmic side of the membrane; that stretch reads LATHPDCQER…NGVYIKIVSR (177 aa). Residue Cys479 coordinates heme.

Belongs to the cytochrome P450 family. In terms of assembly, monomer. Heme is required as a cofactor. Expressed primarily in lung, kidney, and spleen.

It localises to the endoplasmic reticulum membrane. The enzyme catalyses prostaglandin H2 = thromboxane A2. The catalysed reaction is prostaglandin H2 = (12S)-hydroxy-(5Z,8E,10E)-heptadecatrienoate + malonaldehyde. It carries out the reaction a hydroperoxyeicosatetraenoate = an oxoeicosatetraenoate + H2O. It catalyses the reaction (15S)-hydroperoxy-(5Z,8Z,11Z,13E)-eicosatetraenoate = 15-oxo-(5Z,8Z,11Z,13E)-eicosatetraenoate + H2O. The enzyme catalyses (15S)-hydroperoxy-(5Z,8Z,11Z,13E)-eicosatetraenoate + AH2 = (15S)-hydroxy-(5Z,8Z,11Z,13E)-eicosatetraenoate + A + H2O. Catalyzes the conversion of prostaglandin H2 (PGH2) to thromboxane A2 (TXA2), a potent inducer of blood vessel constriction and platelet aggregation. Also cleaves PGH2 to 12-hydroxy-heptadecatrienoicacid (12-HHT) and malondialdehyde, which is known to act as a mediator of DNA damage. 12-HHT and malondialdehyde are formed stoichiometrically in the same amounts as TXA2. Additionally, displays dehydratase activity, toward (15S)-hydroperoxy-(5Z,8Z,11Z,13E)-eicosatetraenoate (15(S)-HPETE) producing 15-KETE and 15-HETE. This Mus musculus (Mouse) protein is Thromboxane-A synthase (Tbxas1).